Here is a 335-residue protein sequence, read N- to C-terminus: Pyridoxal 5'-phosphate synthase subunit PdxS (335 aa).

Residue Asp59 participates in D-ribose 5-phosphate binding. Lys116 functions as the Schiff-base intermediate with D-ribose 5-phosphate in the catalytic mechanism. D-ribose 5-phosphate is bound at residue Gly188. Lys200 contributes to the D-glyceraldehyde 3-phosphate binding site. Residues Gly253 and 274–275 contribute to the D-ribose 5-phosphate site; that span reads GS.

The protein belongs to the PdxS/SNZ family. As to quaternary structure, in the presence of PdxT, forms a dodecamer of heterodimers.

The catalysed reaction is aldehydo-D-ribose 5-phosphate + D-glyceraldehyde 3-phosphate + L-glutamine = pyridoxal 5'-phosphate + L-glutamate + phosphate + 3 H2O + H(+). The protein operates within cofactor biosynthesis; pyridoxal 5'-phosphate biosynthesis. In terms of biological role, catalyzes the formation of pyridoxal 5'-phosphate from ribose 5-phosphate (RBP), glyceraldehyde 3-phosphate (G3P) and ammonia. The ammonia is provided by the PdxT subunit. Can also use ribulose 5-phosphate and dihydroxyacetone phosphate as substrates, resulting from enzyme-catalyzed isomerization of RBP and G3P, respectively. In Desulfurococcus amylolyticus (strain DSM 18924 / JCM 16383 / VKM B-2413 / 1221n) (Desulfurococcus kamchatkensis), this protein is Pyridoxal 5'-phosphate synthase subunit PdxS.